Consider the following 951-residue polypeptide: Bromodomain-containing protein 8 (951 aa).

K85 is subject to N6-acetyllysine. Positions 97 to 171 (VRKLTAERVE…ATDAAYQARQ (75 aa)) form a coiled coil. The tract at residues 161 to 273 (KATDAAYQAR…TPPPSPLLSE (113 aa)) is disordered. The segment covering 204–226 (TPTTMEEATSGVTPGTLPSTPVT) has biased composition (polar residues). Phosphoserine is present on residues S456 and S460. Residues 520-547 (EENDDPQSLPGPWEHPIQQERDKPVPLP) are disordered. A Glycyl lysine isopeptide (Lys-Gly) (interchain with G-Cter in SUMO2) cross-link involves residue K542. An N6-acetyllysine; alternate modification is found at K554. K554 participates in a covalent cross-link: Glycyl lysine isopeptide (Lys-Gly) (interchain with G-Cter in SUMO1); alternate. K554 is covalently cross-linked (Glycyl lysine isopeptide (Lys-Gly) (interchain with G-Cter in SUMO2); alternate). K582 participates in a covalent cross-link: Glycyl lysine isopeptide (Lys-Gly) (interchain with G-Cter in SUMO2). Positions 584-745 (EPTEPEPGMS…PVSESDDGFS (162 aa)) are disordered. Positions 610-622 (PELRSQDSDEEPR) are enriched in basic and acidic residues. K648 is covalently cross-linked (Glycyl lysine isopeptide (Lys-Gly) (interchain with G-Cter in SUMO2)). S652 is subject to Phosphoserine. Residues 673-688 (ETQHKFEMSDSLKEES) are compositionally biased toward basic and acidic residues. K685 is covalently cross-linked (Glycyl lysine isopeptide (Lys-Gly) (interchain with G-Cter in SUMO2)). 3 positions are modified to phosphoserine: S694, S710, and S714. The Bromo domain occupies 779-884 (IQAQKIWKKA…RDVLEQIQQF (106 aa)). The segment at 900-922 (AKSLRGRDSTRKQDASEKDSVPM) is disordered. The segment covering 904-919 (RGRDSTRKQDASEKDS) has biased composition (basic and acidic residues).

In terms of assembly, component of the NuA4 histone acetyltransferase complex which contains the catalytic subunit KAT5/TIP60 and the subunits EP400, TRRAP/PAF400, BRD8/SMAP, EPC1, DMAP1/DNMAP1, RUVBL1/TIP49, RUVBL2, ING3, actin, ACTL6A/BAF53A, MORF4L1/MRG15, MORF4L2/MRGX, MRGBP, YEATS4/GAS41, VPS72/YL1 and MEAF6. Component of a NuA4-related complex which contains EP400, TRRAP/PAF400, SRCAP, BRD8/SMAP, EPC1, DMAP1/DNMAP1, RUVBL1/TIP49, RUVBL2, actin, ACTL6A/BAF53A, VPS72 and YEATS4/GAS41. BRD8 isoform 2 interacts with RXRA/NR2B1 and THRB/ERBA2. Component of a SWR1-like complex.

The protein resides in the nucleus. Its function is as follows. May act as a coactivator during transcriptional activation by hormone-activated nuclear receptors (NR). Stimulates transcriptional activation by AR/DHTR, ESR1/NR3A1, RXRA/NR2B1 and THRB/ERBA2. Component of the NuA4 histone acetyltransferase (HAT) complex which is involved in transcriptional activation of select genes principally by acetylation of nucleosomal histones H4 and H2A. This modification may both alter nucleosome - DNA interactions and promote interaction of the modified histones with other proteins which positively regulate transcription. This complex may be required for the activation of transcriptional programs associated with oncogene and proto-oncogene mediated growth induction, tumor suppressor mediated growth arrest and replicative senescence, apoptosis, and DNA repair. NuA4 may also play a direct role in DNA repair when recruited to sites of DNA damage. Component of a SWR1-like complex that specifically mediates the removal of histone H2A.Z/H2AZ1 from the nucleosome. The sequence is that of Bromodomain-containing protein 8 (Brd8) from Mus musculus (Mouse).